The chain runs to 1194 residues: Protein argonaute 3 (1194 aa).

Positions 1 to 98 are enriched in basic and acidic residues; that stretch reads MDRGGYRGGR…GRGGGGDRGR (98 aa). Disordered regions lie at residues 1–277 and 299–341; these read MDRG…VSQS and TVLP…DKGG. Over residues 142–158 the composition is skewed to low complexity; the sequence is PPSSSQAQVSQGVAPGD. Over residues 167-180 the composition is skewed to basic and acidic residues; the sequence is VGRDGVGDVGRDGV. A compositionally biased stretch (gly residues) spans 181–214; sequence GDVGQGGVGDVGQVGVGDVGQGGVGDVGQGGVGD. Positions 215-228 are enriched in basic and acidic residues; sequence VGRDGVGDVGRDGV. Residues 229-238 are compositionally biased toward gly residues; sequence GDVGRGGVGD. Composition is skewed to low complexity over residues 256 to 277 and 299 to 316; these read QLQQ…VSQS and TVLP…HTAS. Residues 317–326 show a composition bias toward polar residues; sequence GSQVMTPKPS. A compositionally biased stretch (basic and acidic residues) spans 327–341; it reads SSDKKEPVKRPDKGG. The PAZ domain maps to 540–656; the sequence is SVIEYLKLYF…VPMEFCNLVE (117 aa). The region spanning 841–1145 is the Piwi domain; the sequence is LVLCAMTGKH…AASRGRVYYE (305 aa).

The protein belongs to the argonaute family. Ago subfamily.

Involved in RNA-mediated post-transcriptional gene silencing (PTGS). Main component of the RNA-induced silencing complex (RISC) that binds to a short guide RNA such as a microRNA (miRNA) or small interfering RNA (siRNA). RISC uses the mature miRNA or siRNA as a guide for slicer-directed cleavage of homologous mRNAs to repress gene expression. This Arabidopsis thaliana (Mouse-ear cress) protein is Protein argonaute 3 (AGO3).